The following is a 499-amino-acid chain: Glutamate--tRNA ligase (499 aa).

The 'HIGH' region signature appears at 12 to 22 (PSPTGHLHIGN). A 'KMSKS' region motif is present at residues 259–263 (KLSKR). Residue Lys-262 participates in ATP binding.

The protein belongs to the class-I aminoacyl-tRNA synthetase family. Glutamate--tRNA ligase type 1 subfamily. In terms of assembly, monomer.

The protein resides in the cytoplasm. The enzyme catalyses tRNA(Glu) + L-glutamate + ATP = L-glutamyl-tRNA(Glu) + AMP + diphosphate. Catalyzes the attachment of glutamate to tRNA(Glu) in a two-step reaction: glutamate is first activated by ATP to form Glu-AMP and then transferred to the acceptor end of tRNA(Glu). This Lactobacillus acidophilus (strain ATCC 700396 / NCK56 / N2 / NCFM) protein is Glutamate--tRNA ligase.